The chain runs to 644 residues: Serine/threonine kinase YeaG (644 aa).

This sequence belongs to the PrkA family. Monomer.

The protein resides in the cytoplasm. It carries out the reaction L-seryl-[protein] + ATP = O-phospho-L-seryl-[protein] + ADP + H(+). The catalysed reaction is L-threonyl-[protein] + ATP = O-phospho-L-threonyl-[protein] + ADP + H(+). Functionally, kinase that plays a role in the adaptation to sustained nitrogen starvation. In Escherichia coli O157:H7, this protein is Serine/threonine kinase YeaG (yeaG).